The chain runs to 541 residues: CTP synthase (541 aa).

Residues 1-268 (MAKFIFITGG…AEIVCRRLGL (268 aa)) form an amidoligase domain region. Serine 13 lines the CTP pocket. UTP is bound at residue serine 13. Residues 14–19 (GLGKGI) and aspartate 71 contribute to the ATP site. The Mg(2+) site is built by aspartate 71 and glutamate 141. CTP contacts are provided by residues 148 to 150 (DIE), 189 to 194 (KTKPTQ), and lysine 225. Residues 189–194 (KTKPTQ) and lysine 225 contribute to the UTP site. In terms of domain architecture, Glutamine amidotransferase type-1 spans 293–539 (EIALVGKYVA…IKAALEYRAG (247 aa)). Residue glycine 359 participates in L-glutamine binding. Cysteine 386 serves as the catalytic Nucleophile; for glutamine hydrolysis. L-glutamine-binding positions include 387–390 (MGMQ), glutamate 410, and arginine 467. Catalysis depends on residues histidine 512 and glutamate 514.

It belongs to the CTP synthase family. Homotetramer.

The enzyme catalyses UTP + L-glutamine + ATP + H2O = CTP + L-glutamate + ADP + phosphate + 2 H(+). The catalysed reaction is L-glutamine + H2O = L-glutamate + NH4(+). It carries out the reaction UTP + NH4(+) + ATP = CTP + ADP + phosphate + 2 H(+). It participates in pyrimidine metabolism; CTP biosynthesis via de novo pathway; CTP from UDP: step 2/2. With respect to regulation, allosterically activated by GTP, when glutamine is the substrate; GTP has no effect on the reaction when ammonia is the substrate. The allosteric effector GTP functions by stabilizing the protein conformation that binds the tetrahedral intermediate(s) formed during glutamine hydrolysis. Inhibited by the product CTP, via allosteric rather than competitive inhibition. In terms of biological role, catalyzes the ATP-dependent amination of UTP to CTP with either L-glutamine or ammonia as the source of nitrogen. Regulates intracellular CTP levels through interactions with the four ribonucleotide triphosphates. This Symbiobacterium thermophilum (strain DSM 24528 / JCM 14929 / IAM 14863 / T) protein is CTP synthase.